A 963-amino-acid chain; its full sequence is Unconventional myosin-XIX (963 aa).

The Myosin motor domain maps to 35-758 (HQLDDLTKVN…MLELLECGRA (724 aa)). Residue 132–139 (GESGAGKT) participates in ATP binding. An actin-binding region spans residues 602–624 (LEQLLQVLHNTTPHYIRCIKPNS). IQ domains are found at residues 762–782 (EQCARCIQCGWRRHRLQKQEK) and 783–812 (QRRAAVLIQAAFRSWLTRKHIRRLHIAATV). The segment at 829-963 (SKELDGMEEK…LLESHRPVQV (135 aa)) is myMOMA region.

This sequence belongs to the TRAFAC class myosin-kinesin ATPase superfamily. Myosin family. As to quaternary structure, myosin is a hexamer of 2 heavy chains and 4 light chains: interacts with myosin light chains MYL9 and MYL12B.

The protein resides in the mitochondrion outer membrane. The protein localises to the cytoplasm. It is found in the cytoskeleton. Actin-based motor molecule with ATPase activity that localizes to the mitochondrion outer membrane. Motor protein that moves towards the plus-end of actin filaments. Required for mitochondrial inheritance during mitosis. May be involved in mitochondrial transport or positioning. This is Unconventional myosin-XIX from Mus musculus (Mouse).